The sequence spans 103 residues: Cytochrome c55X (103 aa).

The signal sequence occupies residues 1 to 17 (MARLALLLVLLAGTAVA). Residues Cys-36, Cys-39, and His-40 each coordinate heme c.

Binds 1 heme c group covalently per subunit.

It localises to the periplasm. Functionally, monoheme c-type cytochrome. This is Cytochrome c55X (nirC) from Paracoccus denitrificans (strain Pd 1222).